Consider the following 855-residue polypeptide: Discoidin domain-containing receptor 2 (855 aa).

The first 21 residues, 1-21 (MILIPRMLLVLFLLLPILSSA), serve as a signal peptide directing secretion. At 22–399 (KAQVNPAICR…MLKVDDSNTR (378 aa)) the chain is on the extracellular side. In terms of domain architecture, F5/8 type C spans 30 to 185 (CRYPLGMSGG…VCMRVELYGC (156 aa)). 2 disulfide bridges follow: Cys-30/Cys-185 and Cys-73/Cys-177. Residues Asn-121, Asn-213, Asn-261, Asn-280, and Asn-372 are each glycosylated (N-linked (GlcNAc...) asparagine). A helical membrane pass occupies residues 400-421 (ILIGCLVAIIFILLAIIVIILW). The Cytoplasmic portion of the chain corresponds to 422–855 (RQFWQKMLEK…HLLLLQQGDE (434 aa)). Residues 452-471 (SMFNNNRSSSPSEQGSNSTY) are disordered. Residue Tyr-471 is modified to Phosphotyrosine; by SRC and autocatalysis. In terms of domain architecture, Protein kinase spans 563 to 849 (LTFKEKLGEG…PSFQEIHLLL (287 aa)). ATP contacts are provided by residues 569-577 (LGEGQFGEV) and Lys-608. Asp-710 (proton acceptor) is an active-site residue. Residues Tyr-736, Tyr-740, and Tyr-741 each carry the phosphotyrosine; by SRC and autocatalysis modification.

This sequence belongs to the protein kinase superfamily. Tyr protein kinase family. Insulin receptor subfamily. In terms of assembly, binds hydroxyproline-rich sequence motifs in fibrillar, glycosylated collagen, such as the GQOGVMGFO motif, where O stands for hydroxyproline. Interacts with SRC. Interacts (tyrosine phosphorylated) with SHC1. Post-translationally, N-glycosylated. In terms of processing, tyrosine phosphorylated in response to collagen binding. Phosphorylated by SRC; this is required for activation and subsequent autophosphorylation on additional tyrosine residues. Detected in osteocytes, osteoblastic cells in subchondral bone, bone lining cells, tibia and cartilage (at protein level). Detected at high levels in heart and lung, and at low levels in brain, placenta, liver, skeletal muscle, pancreas, and kidney.

Its subcellular location is the cell membrane. The catalysed reaction is L-tyrosyl-[protein] + ATP = O-phospho-L-tyrosyl-[protein] + ADP + H(+). Its activity is regulated as follows. Present in an inactive state in the absence of collagen binding and phosphorylation by SRC. Tyrosine phosphorylation enhances the affinity for ATP and the catalytic activity. Its function is as follows. Tyrosine kinase involved in the regulation of tissues remodeling. It functions as a cell surface receptor for fibrillar collagen and regulates cell differentiation, remodeling of the extracellular matrix, cell migration and cell proliferation. Required for normal bone development. Regulates osteoblast differentiation and chondrocyte maturation via a signaling pathway that involves MAP kinases and leads to the activation of the transcription factor RUNX2. Regulates remodeling of the extracellular matrix by up-regulation of the collagenases MMP1, MMP2 and MMP13, and thereby facilitates cell migration and tumor cell invasion. Promotes fibroblast migration and proliferation, and thereby contributes to cutaneous wound healing. The protein is Discoidin domain-containing receptor 2 (DDR2) of Homo sapiens (Human).